Here is a 377-residue protein sequence, read N- to C-terminus: Histidine protein methyltransferase 1 (377 aa).

The protein belongs to the methyltransferase superfamily. METTL18 family.

Its subcellular location is the cytoplasm. The protein localises to the nucleus. It catalyses the reaction L-histidyl-[protein] + S-adenosyl-L-methionine = N(tele)-methyl-L-histidyl-[protein] + S-adenosyl-L-homocysteine + H(+). Protein-histidine N-methyltransferase that mediates methylation of RPL3 at 'His-243'. Methylates ribosome-associated RPL3, but not free RPL3, thereby regulating 60S subunit assembly. In addition to RPL3, mediates His methylation of other proteins. This chain is Histidine protein methyltransferase 1, found in Saccharomyces cerevisiae (strain ATCC 204508 / S288c) (Baker's yeast).